We begin with the raw amino-acid sequence, 125 residues long: Phosphoribosyl-AMP cyclohydrolase (125 aa).

Residue aspartate 74 coordinates Mg(2+). Cysteine 75 contacts Zn(2+). Positions 76 and 78 each coordinate Mg(2+). Zn(2+)-binding residues include cysteine 92 and cysteine 99.

Belongs to the PRA-CH family. In terms of assembly, homodimer. Requires Mg(2+) as cofactor. It depends on Zn(2+) as a cofactor.

It is found in the cytoplasm. The enzyme catalyses 1-(5-phospho-beta-D-ribosyl)-5'-AMP + H2O = 1-(5-phospho-beta-D-ribosyl)-5-[(5-phospho-beta-D-ribosylamino)methylideneamino]imidazole-4-carboxamide. It functions in the pathway amino-acid biosynthesis; L-histidine biosynthesis; L-histidine from 5-phospho-alpha-D-ribose 1-diphosphate: step 3/9. In terms of biological role, catalyzes the hydrolysis of the adenine ring of phosphoribosyl-AMP. The protein is Phosphoribosyl-AMP cyclohydrolase of Citrifermentans bemidjiense (strain ATCC BAA-1014 / DSM 16622 / JCM 12645 / Bem) (Geobacter bemidjiensis).